A 137-amino-acid chain; its full sequence is Large ribosomal subunit protein uL16 (137 aa).

The protein belongs to the universal ribosomal protein uL16 family. As to quaternary structure, part of the 50S ribosomal subunit.

Binds 23S rRNA and is also seen to make contacts with the A and possibly P site tRNAs. This is Large ribosomal subunit protein uL16 from Tolumonas auensis (strain DSM 9187 / NBRC 110442 / TA 4).